The primary structure comprises 195 residues: PBAN-type neuropeptides (195 aa).

An N-terminal signal peptide occupies residues 1–33 (MIGFAVFSSFNRFTTIFVCVLLCVVYLLSYASG). The propeptide occupies 34–63 (EYDGRDSSSGSNNDRAPSNEFGSCTDGKCI). L80 carries the leucine amide modification. Residues 86 to 117 (ADRKPEINSDIEAFANAFEEPHWAIVTIPETE) constitute a propeptide that is removed on maturation. Q120 is modified (pyrrolidone carboxylic acid). The residue at position 128 (L128) is a Leucine amide. Positions 131 to 153 (ESGEDYFSYGFPKDQEELYTEEQ) are excised as a propeptide. 2 positions are modified to leucine amide: L163 and L175. Residues 178 to 195 (QLHNIVDKPRQNFNDPRF) constitute a propeptide that is removed on maturation.

It belongs to the pyrokinin family.

It is found in the secreted. In terms of biological role, a hormone that controls sex pheromone production in females and pheromone responsiveness in male. Also mediates visceral muscle contractile activity (myotropic activity). The chain is PBAN-type neuropeptides from Apis mellifera (Honeybee).